The sequence spans 295 residues: uncharacterized protein (295 aa).

The signal sequence occupies residues 1 to 19 (MFRKFLFIPLLIVTSLVKA). A disordered region spans residues 274–295 (KRNNPPLKNNNAKSKNSYETHK). Low complexity predominate over residues 276 to 288 (NNPPLKNNNAKSK).

This is an uncharacterized protein from Rickettsia typhi (strain ATCC VR-144 / Wilmington).